The chain runs to 85 residues: Large ribosomal subunit protein bL27 (85 aa).

Positions M1–V23 are disordered.

Belongs to the bacterial ribosomal protein bL27 family.

This is Large ribosomal subunit protein bL27 from Nitrosococcus oceani (strain ATCC 19707 / BCRC 17464 / JCM 30415 / NCIMB 11848 / C-107).